The following is a 553-amino-acid chain: Dihydroxy-acid dehydratase (553 aa).

D78 serves as a coordination point for Mg(2+). [2Fe-2S] cluster is bound at residue C119. Mg(2+) is bound by residues D120 and K121. Residue K121 is modified to N6-carboxylysine. A [2Fe-2S] cluster-binding site is contributed by C193. E441 lines the Mg(2+) pocket. S467 serves as the catalytic Proton acceptor.

It belongs to the IlvD/Edd family. As to quaternary structure, homodimer. The cofactor is [2Fe-2S] cluster. Mg(2+) is required as a cofactor.

It carries out the reaction (2R)-2,3-dihydroxy-3-methylbutanoate = 3-methyl-2-oxobutanoate + H2O. The catalysed reaction is (2R,3R)-2,3-dihydroxy-3-methylpentanoate = (S)-3-methyl-2-oxopentanoate + H2O. Its pathway is amino-acid biosynthesis; L-isoleucine biosynthesis; L-isoleucine from 2-oxobutanoate: step 3/4. The protein operates within amino-acid biosynthesis; L-valine biosynthesis; L-valine from pyruvate: step 3/4. Its function is as follows. Functions in the biosynthesis of branched-chain amino acids. Catalyzes the dehydration of (2R,3R)-2,3-dihydroxy-3-methylpentanoate (2,3-dihydroxy-3-methylvalerate) into 2-oxo-3-methylpentanoate (2-oxo-3-methylvalerate) and of (2R)-2,3-dihydroxy-3-methylbutanoate (2,3-dihydroxyisovalerate) into 2-oxo-3-methylbutanoate (2-oxoisovalerate), the penultimate precursor to L-isoleucine and L-valine, respectively. This chain is Dihydroxy-acid dehydratase, found in Geobacter sulfurreducens (strain ATCC 51573 / DSM 12127 / PCA).